Reading from the N-terminus, the 707-residue chain is Polyribonucleotide nucleotidyltransferase (707 aa).

Mg(2+)-binding residues include Asp-485 and Asp-491. A KH domain is found at 552 to 615 (PRITVINIPK…AAIKWIKGIV (64 aa)). In terms of domain architecture, S1 motif spans 621-689 (GEIYEGKVVK…DRGKVKLSMK (69 aa)).

It belongs to the polyribonucleotide nucleotidyltransferase family. It depends on Mg(2+) as a cofactor.

The protein localises to the cytoplasm. It catalyses the reaction RNA(n+1) + phosphate = RNA(n) + a ribonucleoside 5'-diphosphate. Functionally, involved in mRNA degradation. Catalyzes the phosphorolysis of single-stranded polyribonucleotides processively in the 3'- to 5'-direction. The polypeptide is Polyribonucleotide nucleotidyltransferase (Rhodospirillum centenum (strain ATCC 51521 / SW)).